A 117-amino-acid chain; its full sequence is Dolichyl-diphosphooligosaccharide--protein glycosyltransferase subunit DAD1 (117 aa).

The Cytoplasmic segment spans residues 1 to 33 (MAKTSSTTKDAQDLFHAIWSAYSATPTNLKIID). The chain crosses the membrane as a helical span at residues 34-54 (LYVVFAVFTALLQDVYMALVG). The Lumenal portion of the chain corresponds to 55-57 (PFP). The helical transmembrane segment at 58-78 (FNSFLSGVLSCVGTAVLAVCL) threads the bilayer. At 79–96 (RIQVNKENKEFKDLGPER) the chain is on the cytoplasmic side. The chain crosses the membrane as a helical span at residues 97 to 117 (AFADFVLCNLVLHLVIMNFLG).

The protein belongs to the DAD/OST2 family. Component of the oligosaccharyltransferase (OST) complex.

It localises to the endoplasmic reticulum membrane. It participates in protein modification; protein glycosylation. Subunit of the oligosaccharyl transferase (OST) complex that catalyzes the initial transfer of a defined glycan (Glc(3)Man(9)GlcNAc(2) in eukaryotes) from the lipid carrier dolichol-pyrophosphate to an asparagine residue within an Asn-X-Ser/Thr consensus motif in nascent polypeptide chains, the first step in protein N-glycosylation. N-glycosylation occurs cotranslationally and the complex associates with the Sec61 complex at the channel-forming translocon complex that mediates protein translocation across the endoplasmic reticulum (ER). All subunits are required for a maximal enzyme activity. This Pisum sativum (Garden pea) protein is Dolichyl-diphosphooligosaccharide--protein glycosyltransferase subunit DAD1 (DAD1).